The sequence spans 354 residues: Threonine synthase (354 aa).

The residue at position 61 (Lys-61) is an N6-(pyridoxal phosphate)lysine. Residues Asn-87, 187–191 (GNAGN), and Thr-316 contribute to the pyridoxal 5'-phosphate site.

Belongs to the threonine synthase family. It depends on pyridoxal 5'-phosphate as a cofactor.

It carries out the reaction O-phospho-L-homoserine + H2O = L-threonine + phosphate. It functions in the pathway amino-acid biosynthesis; L-threonine biosynthesis; L-threonine from L-aspartate: step 5/5. Its function is as follows. Catalyzes the gamma-elimination of phosphate from L-phosphohomoserine and the beta-addition of water to produce L-threonine. This chain is Threonine synthase (thrC), found in Halalkalibacterium halodurans (strain ATCC BAA-125 / DSM 18197 / FERM 7344 / JCM 9153 / C-125) (Bacillus halodurans).